The chain runs to 304 residues: Putative S-adenosyl-L-methionine-dependent methyltransferase MAV_1058 (304 aa).

S-adenosyl-L-methionine is bound by residues D128 and 157-158; that span reads DL.

It belongs to the UPF0677 family.

In terms of biological role, exhibits S-adenosyl-L-methionine-dependent methyltransferase activity. In Mycobacterium avium (strain 104), this protein is Putative S-adenosyl-L-methionine-dependent methyltransferase MAV_1058.